We begin with the raw amino-acid sequence, 82 residues long: UPF0180 protein BT9727_1277 (82 aa).

Belongs to the UPF0180 family.

The polypeptide is UPF0180 protein BT9727_1277 (Bacillus thuringiensis subsp. konkukian (strain 97-27)).